The following is a 477-amino-acid chain: Glycogen synthase (477 aa).

An ADP-alpha-D-glucose-binding site is contributed by K15.

This sequence belongs to the glycosyltransferase 1 family. Bacterial/plant glycogen synthase subfamily.

It carries out the reaction [(1-&gt;4)-alpha-D-glucosyl](n) + ADP-alpha-D-glucose = [(1-&gt;4)-alpha-D-glucosyl](n+1) + ADP + H(+). It participates in glycan biosynthesis; glycogen biosynthesis. Its function is as follows. Synthesizes alpha-1,4-glucan chains using ADP-glucose. The chain is Glycogen synthase from Glaesserella parasuis serovar 5 (strain SH0165) (Haemophilus parasuis).